The sequence spans 134 residues: Putative toxin MJ0605 (134 aa).

It belongs to the UPF0332 family.

In terms of biological role, putative toxin component of a putative type VII toxin-antitoxin (TA) system. Its cognate antitoxin might be MJ0604. This Methanocaldococcus jannaschii (strain ATCC 43067 / DSM 2661 / JAL-1 / JCM 10045 / NBRC 100440) (Methanococcus jannaschii) protein is Putative toxin MJ0605.